The primary structure comprises 1381 residues: Hepatocyte growth factor receptor (1381 aa).

Positions 1-24 are cleaved as a signal peptide; it reads MKAPAVLAPGILVLLFTLVQRSNG. Residues 25–934 are Extracellular-facing; the sequence is ECKEALTKSE…VQPDQNFTGL (910 aa). In terms of domain architecture, Sema spans 27-515; the sequence is KEALTKSEMN…TGKKITKIPL (489 aa). The N-linked (GlcNAc...) asparagine glycan is linked to asparagine 45. 4 disulfides stabilise this stretch: cysteine 95–cysteine 101, cysteine 98–cysteine 160, cysteine 133–cysteine 141, and cysteine 172–cysteine 175. An N-linked (GlcNAc...) asparagine glycan is attached at asparagine 106. Asparagine 149 is a glycosylation site (N-linked (GlcNAc...) asparagine). Asparagine 202 carries N-linked (GlcNAc...) asparagine glycosylation. Disulfide bonds link cysteine 298–cysteine 363 and cysteine 385–cysteine 397. Asparagine 399 carries N-linked (GlcNAc...) asparagine glycosylation. Cystine bridges form between cysteine 520-cysteine 538, cysteine 526-cysteine 561, cysteine 529-cysteine 545, and cysteine 541-cysteine 551. IPT/TIG domains follow at residues 563–655, 657–739, and 742–836; these read PTIY…FSYV, PIIT…FSYR, and PIVY…LIYV. O-linked (Man) threonine glycosylation is present at threonine 582. Residues asparagine 607 and asparagine 635 are each glycosylated (N-linked (GlcNAc...) asparagine). O-linked (Man) threonine glycosylation is found at threonine 676 and threonine 761. 3 N-linked (GlcNAc...) asparagine glycosylation sites follow: asparagine 785, asparagine 879, and asparagine 930. The helical transmembrane segment at 935-955 threads the bilayer; that stretch reads VAGVVSISIALLLLLGLFLWL. Residues 956-1381 lie on the Cytoplasmic side of the membrane; that stretch reads KKKKQIKDLG…QDNTDGEVDT (426 aa). Position 966 is a phosphoserine (serine 966). The residue at position 977 (threonine 977) is a Phosphothreonine. Phosphoserine occurs at positions 990, 997, and 1000. Tyrosine 1003 carries the post-translational modification Phosphotyrosine. A Protein kinase domain is found at 1078-1345; it reads VHFNEVIGRG…RISAIFSTFI (268 aa). ATP-binding positions include 1084–1092 and lysine 1110; that span reads IGRGHFGCV. Aspartate 1204 (proton acceptor) is an active-site residue. An interaction with RANBP9 region spans residues 1212-1381; that stretch reads LDEKFTVKVA…QDNTDGEVDT (170 aa). Tyrosine 1230 is subject to Phosphotyrosine. 2 positions are modified to phosphotyrosine; by autocatalysis: tyrosine 1234 and tyrosine 1235. Residue threonine 1289 is modified to Phosphothreonine. Residues 1320–1359 are interaction with MUC20; the sequence is WHPKAEMRPSFSELVSRISAIFSTFIGEHYVHVNATYVNV. Phosphotyrosine; by autocatalysis is present on residues tyrosine 1349 and tyrosine 1356. Tyrosine 1365 is subject to Phosphotyrosine.

This sequence belongs to the protein kinase superfamily. Tyr protein kinase family. In terms of assembly, heterodimer made of an alpha chain (50 kDa) and a beta chain (145 kDa) which are disulfide linked. Binds PLXNB1. Interacts when phosphorylated with downstream effectors including STAT3, PIK3R1, SRC, PCLG1, GRB2 and GAB1. Interacts with SPSB1, SPSB2 and SPSB4. Interacts with INPP5D/SHIP1. When phosphorylated at Tyr-1356, interacts with INPPL1/SHIP2. Interacts with RANBP9 and RANBP10, as well as SPSB1, SPSB2, SPSB3 and SPSB4. SPSB1 binding occurs in the presence and in the absence of HGF, however HGF treatment has a positive effect on this interaction. Interacts with MUC20; prevents interaction with GRB2 and suppresses hepatocyte growth factor-induced cell proliferation. Interacts with GRB10. Interacts with PTPN1 and PTPN2. Interacts with HSP90AA1 and HSP90AB1; the interaction suppresses MET kinase activity. Interacts with tensin TNS3. Interacts (when phosphorylated) with tensin TNS4 (via SH2 domain); the interaction increases MET protein stability by inhibiting MET endocytosis and subsequent lysosomal degradation. In terms of processing, autophosphorylated in response to ligand binding on Tyr-1234 and Tyr-1235 in the kinase domain leading to further phosphorylation of Tyr-1349 and Tyr-1356 in the C-terminal multifunctional docking site. Dephosphorylated by PTPRJ at Tyr-1349 and Tyr-1365. Dephosphorylated by PTPN1 and PTPN2. Post-translationally, ubiquitinated. Ubiquitination by CBL regulates the receptor stability and activity through proteasomal degradation. O-mannosylation of IPT/TIG domains by TMEM260 is required for protein maturation. O-mannosylated residues are composed of single mannose glycans that are not elongated or modified.

It localises to the membrane. The catalysed reaction is L-tyrosyl-[protein] + ATP = O-phospho-L-tyrosyl-[protein] + ADP + H(+). In terms of biological role, receptor tyrosine kinase that transduces signals from the extracellular matrix into the cytoplasm by binding to hepatocyte growth factor/HGF ligand. Regulates many physiological processes including proliferation, scattering, morphogenesis and survival. Ligand binding at the cell surface induces autophosphorylation of MET on its intracellular domain that provides docking sites for downstream signaling molecules. Following activation by ligand, interacts with the PI3-kinase subunit PIK3R1, PLCG1, SRC, GRB2, STAT3 or the adapter GAB1. Recruitment of these downstream effectors by MET leads to the activation of several signaling cascades including the RAS-ERK, PI3 kinase-AKT, or PLCgamma-PKC. The RAS-ERK activation is associated with the morphogenetic effects while PI3K/AKT coordinates prosurvival effects. During embryonic development, MET signaling plays a role in gastrulation, development and migration of muscles and neuronal precursors, angiogenesis and kidney formation. In adults, participates in wound healing as well as organ regeneration and tissue remodeling. Also promotes differentiation and proliferation of hematopoietic cells. This chain is Hepatocyte growth factor receptor (MET), found in Callithrix jacchus (White-tufted-ear marmoset).